The primary structure comprises 140 residues: ATP synthase epsilon chain (140 aa).

It belongs to the ATPase epsilon chain family. F-type ATPases have 2 components, CF(1) - the catalytic core - and CF(0) - the membrane proton channel. CF(1) has five subunits: alpha(3), beta(3), gamma(1), delta(1), epsilon(1). CF(0) has three main subunits: a, b and c.

The protein localises to the cell inner membrane. Produces ATP from ADP in the presence of a proton gradient across the membrane. The chain is ATP synthase epsilon chain from Yersinia enterocolitica serotype O:8 / biotype 1B (strain NCTC 13174 / 8081).